Reading from the N-terminus, the 421-residue chain is Gamma-glutamyl phosphate reductase (421 aa).

Belongs to the gamma-glutamyl phosphate reductase family.

Its subcellular location is the cytoplasm. The catalysed reaction is L-glutamate 5-semialdehyde + phosphate + NADP(+) = L-glutamyl 5-phosphate + NADPH + H(+). Its pathway is amino-acid biosynthesis; L-proline biosynthesis; L-glutamate 5-semialdehyde from L-glutamate: step 2/2. Functionally, catalyzes the NADPH-dependent reduction of L-glutamate 5-phosphate into L-glutamate 5-semialdehyde and phosphate. The product spontaneously undergoes cyclization to form 1-pyrroline-5-carboxylate. In Brucella abortus (strain 2308), this protein is Gamma-glutamyl phosphate reductase.